A 433-amino-acid polypeptide reads, in one-letter code: Glutamate-1-semialdehyde 2,1-aminomutase (433 aa).

Lys270 carries the post-translational modification N6-(pyridoxal phosphate)lysine.

It belongs to the class-III pyridoxal-phosphate-dependent aminotransferase family. HemL subfamily. In terms of assembly, homodimer. The cofactor is pyridoxal 5'-phosphate.

Its subcellular location is the cytoplasm. It catalyses the reaction (S)-4-amino-5-oxopentanoate = 5-aminolevulinate. It participates in porphyrin-containing compound metabolism; protoporphyrin-IX biosynthesis; 5-aminolevulinate from L-glutamyl-tRNA(Glu): step 2/2. In Symbiobacterium thermophilum (strain DSM 24528 / JCM 14929 / IAM 14863 / T), this protein is Glutamate-1-semialdehyde 2,1-aminomutase.